Consider the following 548-residue polypeptide: Phosphoglucomutase (548 aa).

Residue Ser-135 is the Phosphoserine intermediate of the active site. Positions 135, 288, 290, and 292 each coordinate Mg(2+).

This sequence belongs to the phosphohexose mutase family. It depends on Mg(2+) as a cofactor.

It carries out the reaction alpha-D-glucose 1-phosphate = alpha-D-glucose 6-phosphate. It participates in glycolipid metabolism; diglucosyl-diacylglycerol biosynthesis. In terms of biological role, catalyzes the interconversion between glucose-6-phosphate and alpha-glucose-1-phosphate. This is the first step in the biosynthesis of diglucosyl-diacylglycerol (Glc2-DAG), i.e. a glycolipid found in the membrane, which is also used as a membrane anchor for lipoteichoic acid (LTA). The chain is Phosphoglucomutase (pgcA) from Staphylococcus haemolyticus (strain JCSC1435).